Consider the following 433-residue polypeptide: Glutamate-1-semialdehyde 2,1-aminomutase (433 aa).

At lysine 273 the chain carries N6-(pyridoxal phosphate)lysine.

The protein belongs to the class-III pyridoxal-phosphate-dependent aminotransferase family. HemL subfamily. Homodimer. Requires pyridoxal 5'-phosphate as cofactor.

The protein localises to the cytoplasm. It carries out the reaction (S)-4-amino-5-oxopentanoate = 5-aminolevulinate. It participates in porphyrin-containing compound metabolism; protoporphyrin-IX biosynthesis; 5-aminolevulinate from L-glutamyl-tRNA(Glu): step 2/2. It functions in the pathway porphyrin-containing compound metabolism; chlorophyll biosynthesis. In Crocosphaera subtropica (strain ATCC 51142 / BH68) (Cyanothece sp. (strain ATCC 51142)), this protein is Glutamate-1-semialdehyde 2,1-aminomutase.